The primary structure comprises 334 residues: Ornithine carbamoyltransferase (334 aa).

Carbamoyl phosphate contacts are provided by residues 56-59, Gln83, Arg107, and 134-137; these read STRT and HPTQ. Residues Asn168, Asp232, and 236-237 contribute to the L-ornithine site; that span reads SM. Carbamoyl phosphate-binding positions include 274–275 and Arg320; that span reads CL.

It belongs to the aspartate/ornithine carbamoyltransferase superfamily. OTCase family.

It is found in the cytoplasm. It carries out the reaction carbamoyl phosphate + L-ornithine = L-citrulline + phosphate + H(+). The protein operates within amino-acid biosynthesis; L-arginine biosynthesis; L-arginine from L-ornithine and carbamoyl phosphate: step 1/3. Its function is as follows. Reversibly catalyzes the transfer of the carbamoyl group from carbamoyl phosphate (CP) to the N(epsilon) atom of ornithine (ORN) to produce L-citrulline. This is Ornithine carbamoyltransferase from Shigella dysenteriae serotype 1 (strain Sd197).